The sequence spans 217 residues: Ribosomal RNA large subunit methyltransferase E (217 aa).

Residues G64, W66, D92, D108, and D133 each contribute to the S-adenosyl-L-methionine site. K173 (proton acceptor) is an active-site residue.

It belongs to the class I-like SAM-binding methyltransferase superfamily. RNA methyltransferase RlmE family.

The protein localises to the cytoplasm. The enzyme catalyses uridine(2552) in 23S rRNA + S-adenosyl-L-methionine = 2'-O-methyluridine(2552) in 23S rRNA + S-adenosyl-L-homocysteine + H(+). Its function is as follows. Specifically methylates the uridine in position 2552 of 23S rRNA at the 2'-O position of the ribose in the fully assembled 50S ribosomal subunit. This Delftia acidovorans (strain DSM 14801 / SPH-1) protein is Ribosomal RNA large subunit methyltransferase E.